Reading from the N-terminus, the 343-residue chain is Homeobox protein DBX1 (343 aa).

Disordered regions lie at residues 56–100 (RSVP…TAFS) and 240–343 (KERE…ITVS). A DNA-binding region (homeobox) is located at residues 181–240 (GMLRRAVFSDVQRKALEKMFQKQKYISKPDRKKLAAKLGLKDSQVKIWFQNRRMKWRNSK). Residues 314-323 (AHSSSPGKPS) show a composition bias toward low complexity. The segment covering 326-343 (SDSEEEEEGEEQEEITVS) has biased composition (acidic residues).

This sequence belongs to the H2.0 homeobox family.

Its subcellular location is the nucleus. In terms of biological role, could have a role in patterning the central nervous system during embryogenesis. Has a key role in regulating the distinct phenotypic features that distinguish two major classes of ventral interneurons, V0 and V1 neurons. Regulates the transcription factor profile, neurotransmitter phenotype, intraspinal migratory path and axonal trajectory of V0 neurons, features that differentiate them from an adjacent set of V1 neurons. The protein is Homeobox protein DBX1 (DBX1) of Homo sapiens (Human).